The following is a 63-amino-acid chain: Translational regulator CsrA (63 aa).

The protein belongs to the CsrA/RsmA family. In terms of assembly, homodimer; the beta-strands of each monomer intercalate to form a hydrophobic core, while the alpha-helices form wings that extend away from the core.

The protein localises to the cytoplasm. Functionally, a key translational regulator that binds mRNA to regulate translation initiation and/or mRNA stability. Mediates global changes in gene expression, shifting from rapid growth to stress survival by linking envelope stress, the stringent response and the catabolite repression systems. Usually binds in the 5'-UTR; binding at or near the Shine-Dalgarno sequence prevents ribosome-binding, repressing translation, binding elsewhere in the 5'-UTR can activate translation and/or stabilize the mRNA. Its function is antagonized by small RNA(s). In Alteromonas mediterranea (strain DSM 17117 / CIP 110805 / LMG 28347 / Deep ecotype), this protein is Translational regulator CsrA.